Reading from the N-terminus, the 435-residue chain is Enolase (435 aa).

Position 167 (Gln167) interacts with (2R)-2-phosphoglycerate. Catalysis depends on Glu209, which acts as the Proton donor. Residues Asp246, Glu291, and Asp318 each contribute to the Mg(2+) site. Lys343, Arg372, Ser373, and Lys394 together coordinate (2R)-2-phosphoglycerate. The active-site Proton acceptor is the Lys343.

This sequence belongs to the enolase family. In terms of assembly, component of the RNA degradosome, a multiprotein complex involved in RNA processing and mRNA degradation. It depends on Mg(2+) as a cofactor.

It is found in the cytoplasm. The protein localises to the secreted. Its subcellular location is the cell surface. It catalyses the reaction (2R)-2-phosphoglycerate = phosphoenolpyruvate + H2O. It functions in the pathway carbohydrate degradation; glycolysis; pyruvate from D-glyceraldehyde 3-phosphate: step 4/5. Its function is as follows. Catalyzes the reversible conversion of 2-phosphoglycerate (2-PG) into phosphoenolpyruvate (PEP). It is essential for the degradation of carbohydrates via glycolysis. In Psychromonas ingrahamii (strain DSM 17664 / CCUG 51855 / 37), this protein is Enolase.